The sequence spans 256 residues: Probable succinate transporter subunit YjjP (256 aa).

Over 1–113 (MQTEQQRAVT…KRFSQIQPLR (113 aa)) the chain is Cytoplasmic. A helical membrane pass occupies residues 114–135 (YPRWLVALMVGLSCACFCKLNN). Residues 136 to 140 (GGWDG) lie on the Periplasmic side of the membrane. Residues 141–158 (AVITFFASTTAMYIRQLL) form a helical membrane-spanning segment. The Cytoplasmic segment spans residues 159-168 (AQRHLHPQIN). Residues 169–189 (FCLTAFAATTISGLLLQLPTF) traverse the membrane as a helical segment. At 190-194 (SNTPT) the chain is on the periplasmic side. A helical transmembrane segment spans residues 195–215 (IAMAASVLLLVPGFPLINAVA). At 216 to 228 (DMFKGHINTGLAR) the chain is on the cytoplasmic side. Residues 229–249 (WAIASLLTLATCVGVVMALTI) form a helical membrane-spanning segment. Over 250–256 (WGLRGWV) the chain is Periplasmic.

The protein belongs to the ThrE exporter (TC 2.A.79) family. In terms of assembly, the transporter is composed of YjjB and YjjP.

The protein localises to the cell inner membrane. In terms of biological role, involved in succinate export with YjjB. Both proteins are required for export. Contributes to succinate production under both aerobic and anaerobic conditions. This is Probable succinate transporter subunit YjjP (yjjP) from Escherichia coli (strain K12).